Here is a 153-residue protein sequence, read N- to C-terminus: Ribosome maturation factor RimP (153 aa).

Belongs to the RimP family.

Its subcellular location is the cytoplasm. Functionally, required for maturation of 30S ribosomal subunits. This chain is Ribosome maturation factor RimP, found in Psychromonas ingrahamii (strain DSM 17664 / CCUG 51855 / 37).